A 297-amino-acid polypeptide reads, in one-letter code: 32 kDa beta-galactoside-binding lectin lec-3 (297 aa).

Galectin domains lie at 11–142 (YRSK…VQWG) and 151–290 (ESGI…IQVV). Residue 224 to 230 (WGNEERE) participates in a beta-D-galactoside binding.

Binds galactose. The polypeptide is 32 kDa beta-galactoside-binding lectin lec-3 (lec-3) (Caenorhabditis elegans).